A 203-amino-acid polypeptide reads, in one-letter code: Glycerol-3-phosphate acyltransferase (203 aa).

A run of 4 helical transmembrane segments spans residues 4-24 (LTFAMSGIAYLLGSVSNAVLI), 68-88 (IPVYLAWYLGIPPLYLGFIGI), 104-124 (GGKGVATALGALLPLGLDMGS), and 125-145 (FMIVTWLIVLLFTGYSSLAAI).

Belongs to the PlsY family. Probably interacts with PlsX.

The protein resides in the cell inner membrane. The enzyme catalyses an acyl phosphate + sn-glycerol 3-phosphate = a 1-acyl-sn-glycero-3-phosphate + phosphate. Its pathway is lipid metabolism; phospholipid metabolism. Catalyzes the transfer of an acyl group from acyl-phosphate (acyl-PO(4)) to glycerol-3-phosphate (G3P) to form lysophosphatidic acid (LPA). This enzyme utilizes acyl-phosphate as fatty acyl donor, but not acyl-CoA or acyl-ACP. The sequence is that of Glycerol-3-phosphate acyltransferase from Tolumonas auensis (strain DSM 9187 / NBRC 110442 / TA 4).